The sequence spans 425 residues: 5-hydroxytryptamine receptor 7 (425 aa).

Topologically, residues 1-72 (MLIQVQPSHL…LLYGDTEKIV (72 aa)) are extracellular. N-linked (GlcNAc...) asparagine glycans are attached at residues N14, N41, and N51. Residues 73–97 (IGVVLSIITLFTIAGNALVIISVCI) traverse the membrane as a helical segment. The Cytoplasmic portion of the chain corresponds to 98–107 (VKKLRQPSNY). The helical transmembrane segment at 108–129 (LVVSLAAADLSVAVAVMPFVII) threads the bilayer. Residues 130 to 141 (TDLVGGEWLFGK) are Extracellular-facing. The chain crosses the membrane as a helical span at residues 142–167 (VFCNVFIAMDVMCCTASIMTLCVISV). An intrachain disulfide couples C144 to C220. Position 151 (D151) interacts with serotonin. The Cytoplasmic portion of the chain corresponds to 168-187 (DRYLGITRPLTYPARQNGKL). Residues 188–208 (MAKMVFIVWLLSASITLPPLF) form a helical membrane-spanning segment. Topologically, residues 209–226 (GWAKNVNVERVCLISQDF) are extracellular. A helical membrane pass occupies residues 227 to 249 (GYTVYSTAVAFYIPMTVMLVMYQ). Residues 250–322 (RIFVAAKISA…SIFKREQKAA (73 aa)) lie on the Cytoplasmic side of the membrane. A helical transmembrane segment spans residues 323–348 (RTLGIIVGAFTFCWLPFFLLSTARPF). Residues 349 to 359 (ICGIMCSCMPL) lie on the Extracellular side of the membrane. A helical membrane pass occupies residues 360–383 (RLERTLLWLGYTNSLINPLIYAFF). The Cytoplasmic segment spans residues 384–425 (NRDLRTTFWNLLRCKYTNINRRLSAASMHEALKVTERHEGIL). The S-palmitoyl cysteine moiety is linked to residue C397.

This sequence belongs to the G-protein coupled receptor 1 family.

Its subcellular location is the cell membrane. G-protein coupled receptor for 5-hydroxytryptamine (serotonin), a biogenic hormone that functions as a neurotransmitter, a hormone and a mitogen. Ligand binding causes a conformation change that triggers signaling via guanine nucleotide-binding proteins (G proteins) and modulates the activity of downstream effectors. HTR7 is coupled to G(s) G alpha proteins and mediates activation of adenylate cyclase activity. The polypeptide is 5-hydroxytryptamine receptor 7 (htr7) (Xenopus laevis (African clawed frog)).